The sequence spans 83 residues: Small ribosomal subunit protein bS16 (83 aa).

This sequence belongs to the bacterial ribosomal protein bS16 family.

This is Small ribosomal subunit protein bS16 from Borrelia duttonii (strain Ly).